Here is a 352-residue protein sequence, read N- to C-terminus: Chalcone synthase C (352 aa).

The active site involves Cys-170.

It belongs to the thiolase-like superfamily. Chalcone/stilbene synthases family.

It carries out the reaction (E)-4-coumaroyl-CoA + 3 malonyl-CoA + 3 H(+) = 2',4,4',6'-tetrahydroxychalcone + 3 CO2 + 4 CoA. It participates in secondary metabolite biosynthesis; flavonoid biosynthesis. The primary product of this enzyme is 4,2',4',6'-tetrahydroxychalcone (also termed naringenin-chalcone or chalcone) which can under specific conditions spontaneously isomerize into naringenin. The polypeptide is Chalcone synthase C (CHSC) (Ipomoea purpurea (Common morning glory)).